We begin with the raw amino-acid sequence, 267 residues long: HTH-type transcriptional activator CsvR (267 aa).

DNA-binding regions (H-T-H motif) lie at residues 183–204 (AIIA…ESED) and 230–253 (ISQI…NKHF).

As to quaternary structure, homodimer.

Transcriptional activator of fimbrial genes in enterotoxigenic E.coli. The chain is HTH-type transcriptional activator CsvR from Escherichia coli.